The chain runs to 1229 residues: uncharacterized protein (1229 aa).

Positions 1 to 19 are cleaved as a signal peptide; it reads MKYFLLLFLLVLSFTLVES. N-linked (GlcNAc...) asparagine glycosylation is found at N238, N270, N370, N538, N691, and N701. Residues 678-813 enclose the Galectin 1 domain; it reads RMVNFANVME…QWNIDTVKMN (136 aa). Polar residues predominate over residues 818 to 829; the sequence is HTTTVEPSTPLE. A disordered region spans residues 818–903; that stretch reads HTTTVEPSTP…TLPPTTTPYN (86 aa). The span at 830–846 shows a compositional bias: low complexity; that stretch reads TASTSQSTPSATLTSTT. Positions 847–869 are enriched in polar residues; it reads ENIPSTSKIPETSTTQRPTSPIL. Residues 870-901 show a composition bias toward low complexity; the sequence is TSGATSTSSSTESTTTSPTTSTTTTLPPTTTP. N-linked (GlcNAc...) asparagine glycans are attached at residues N903, N938, and N948. The Galectin 2 domain maps to 925-1059; the sequence is RPVVFSRYME…ESTIDTVSMA (135 aa). The interval 1061–1087 is disordered; it reads VRPPTTPTTTTSTTTTTTPKLTTTSTL. Over residues 1067–1087 the composition is skewed to low complexity; sequence PTTTTSTTTTTTPKLTTTSTL. N1146 carries an N-linked (GlcNAc...) asparagine glycan.

This is an uncharacterized protein from Caenorhabditis elegans.